A 237-amino-acid chain; its full sequence is Phosphoribosylaminoimidazole-succinocarboxamide synthase (237 aa).

It belongs to the SAICAR synthetase family.

It carries out the reaction 5-amino-1-(5-phospho-D-ribosyl)imidazole-4-carboxylate + L-aspartate + ATP = (2S)-2-[5-amino-1-(5-phospho-beta-D-ribosyl)imidazole-4-carboxamido]succinate + ADP + phosphate + 2 H(+). It participates in purine metabolism; IMP biosynthesis via de novo pathway; 5-amino-1-(5-phospho-D-ribosyl)imidazole-4-carboxamide from 5-amino-1-(5-phospho-D-ribosyl)imidazole-4-carboxylate: step 1/2. The protein is Phosphoribosylaminoimidazole-succinocarboxamide synthase of Salmonella arizonae (strain ATCC BAA-731 / CDC346-86 / RSK2980).